Consider the following 124-residue polypeptide: Large ribosomal subunit protein uL18 (124 aa).

Belongs to the universal ribosomal protein uL18 family. Part of the 50S ribosomal subunit; part of the 5S rRNA/L5/L18/L25 subcomplex. Contacts the 5S and 23S rRNAs.

This is one of the proteins that bind and probably mediate the attachment of the 5S RNA into the large ribosomal subunit, where it forms part of the central protuberance. This Thermomicrobium roseum (strain ATCC 27502 / DSM 5159 / P-2) protein is Large ribosomal subunit protein uL18.